A 488-amino-acid chain; its full sequence is Proline--tRNA ligase (488 aa).

This sequence belongs to the class-II aminoacyl-tRNA synthetase family. ProS type 3 subfamily. Homodimer.

The protein localises to the cytoplasm. The catalysed reaction is tRNA(Pro) + L-proline + ATP = L-prolyl-tRNA(Pro) + AMP + diphosphate. In terms of biological role, catalyzes the attachment of proline to tRNA(Pro) in a two-step reaction: proline is first activated by ATP to form Pro-AMP and then transferred to the acceptor end of tRNA(Pro). This Borrelia garinii subsp. bavariensis (strain ATCC BAA-2496 / DSM 23469 / PBi) (Borreliella bavariensis) protein is Proline--tRNA ligase.